Consider the following 317-residue polypeptide: N(5)-(carboxyethyl)ornithine synthase (317 aa).

Pyruvate contacts are provided by Arg-15, Lys-71, and His-92. Position 172–177 (Gly-172–Ser-177) interacts with NADP(+).

The protein belongs to the AlaDH/PNT family. CEOS subfamily. As to quaternary structure, homotetramer.

The catalysed reaction is N(5)-[1(S)-1-carboxyethyl]-L-ornithine + NADP(+) + H2O = L-ornithine + pyruvate + NADPH + H(+). Catalyzes the NADPH-dependent reductive condensation between pyruvic acid and the side chain amino group of L-ornithine to form N(5)-(L-1-carboxyethyl)-L-ornithine. To a lesser extent, can also use L-lysine as substrate (yielding N(6)-(L-1-carboxyethyl)-L-lysine), and the D-isomers of the 2 basic amino acids. Can use alpha-keto acids other than pyruvate, e.g. glyoxylate. This Clostridium botulinum (strain Hall / ATCC 3502 / NCTC 13319 / Type A) protein is N(5)-(carboxyethyl)ornithine synthase (ceo).